Consider the following 332-residue polypeptide: Fructose-1,6-bisphosphatase class 1 (332 aa).

Mg(2+) is bound by residues Glu89, Asp110, Leu112, and Asp113. Substrate contacts are provided by residues 113-116 (DGSS), Asn206, Tyr239, 257-259 (YLY), and Lys269. Mg(2+) is bound at residue Glu275.

This sequence belongs to the FBPase class 1 family. As to quaternary structure, homotetramer. Mg(2+) is required as a cofactor.

It is found in the cytoplasm. It carries out the reaction beta-D-fructose 1,6-bisphosphate + H2O = beta-D-fructose 6-phosphate + phosphate. Its pathway is carbohydrate biosynthesis; gluconeogenesis. The protein is Fructose-1,6-bisphosphatase class 1 of Salmonella typhimurium (strain LT2 / SGSC1412 / ATCC 700720).